The chain runs to 689 residues: Glycine--tRNA ligase beta subunit (689 aa).

It belongs to the class-II aminoacyl-tRNA synthetase family. As to quaternary structure, tetramer of two alpha and two beta subunits.

The protein resides in the cytoplasm. The enzyme catalyses tRNA(Gly) + glycine + ATP = glycyl-tRNA(Gly) + AMP + diphosphate. The sequence is that of Glycine--tRNA ligase beta subunit from Escherichia coli O127:H6 (strain E2348/69 / EPEC).